The primary structure comprises 886 residues: Linoleate 9S-lipoxygenase 5 (886 aa).

The PLAT domain maps to 35–180 (IEGEVVVMKK…RYRSDRVFFS (146 aa)). In terms of domain architecture, Lipoxygenase spans 183-886 (AYLPSETPEL…GKGIPNSVSI (704 aa)). Residues 234 to 266 (GPDSVRPVLGGSPELPYPRRGKTGRKSTKSDPK) are disordered. Positions 542, 547, 733, 737, and 886 each coordinate Fe cation.

This sequence belongs to the lipoxygenase family. Requires Fe cation as cofactor. In terms of tissue distribution, expressed in roots.

The catalysed reaction is (9Z,12Z)-octadecadienoate + O2 = (9S)-hydroperoxy-(10E,12Z)-octadecadienoate. The enzyme catalyses (9Z,12Z,15Z)-octadecatrienoate + O2 = (9S)-hydroperoxy-(10E,12Z,15Z)-octadecatrienoate. The protein operates within lipid metabolism; oxylipin biosynthesis. Functionally, 9S-lipoxygenase that can use linoleic acid or linolenic acid as substrates. Plant lipoxygenases may be involved in a number of diverse aspects of plant physiology including growth and development, pest resistance, and senescence or responses to wounding. Catalyzes the hydroperoxidation of lipids containing a cis,cis-1,4-pentadiene structure. Function as regulators of root development by controlling the emergence of lateral roots. 9S-lypoxygenase-derived oxylipins may play an antagonistic role to ethylene signaling in the control of responses involving oxidative stress, lipid peroxidation and plant defense. LOX5-derived oxylipins may facilitate performance of green peach aphid (Myzus persicae) on foliage. 9S-lypoxygenase-derived oxylipins are engaged during infection to control the balance between salicylic acid (SA) and jasmonate (JA) signaling to facilitate infection by the fungal pathogen Fusarium graminearum. 9S-lypoxygenase-derived oxylipins activate brassinosteroid signaling to promote cell wall-based defense and limit pathogen infection. Does not seem to contribute to the oxidation of free fatty acids during seed aging. The chain is Linoleate 9S-lipoxygenase 5 from Arabidopsis thaliana (Mouse-ear cress).